Consider the following 965-residue polypeptide: 26S proteasome non-ATPase regulatory subunit 1 (965 aa).

PC repeat units lie at residues 380–413, 418–452, 454–488, 489–523, 560–595, 630–664, 665–706, and 708–738; these read NAVA…EGFG, GAML…EPVR, GACL…VSGE, SAGI…DKTQ, TGIC…DVKR, GAAM…FVRK, GALL…SLVK, and GAII…DMGS. Residues 836–856 show a composition bias toward low complexity; that stretch reads ASASSAAAAPSSSSTSGTAPA. Disordered regions lie at residues 836–889 and 943–965; these read ASAS…LQNP and TPAS…INDF. Over residues 863-882 the composition is skewed to basic and acidic residues; that stretch reads EVDQPGKSKKEKAPEKDTKP.

Belongs to the proteasome subunit S1 family.

Acts as a regulatory subunit of the 26 proteasome which is involved in the ATP-dependent degradation of ubiquitinated proteins. In Caenorhabditis elegans, this protein is 26S proteasome non-ATPase regulatory subunit 1 (rpn-2).